Reading from the N-terminus, the 188-residue chain is Deoxycytidylate deaminase (188 aa).

In terms of domain architecture, CMP/dCMP-type deaminase spans 1–171 (MKASTVLQIA…DILRNAGIEV (171 aa)). Residues C19, C49, H94, E102, and H104 each contribute to the Zn(2+) site. The Proton donor role is filled by E106. Residues C132 and C135 each coordinate Zn(2+).

The protein belongs to the cytidine and deoxycytidylate deaminase family. In terms of assembly, homohexamer. Requires Zn(2+) as cofactor.

The enzyme catalyses dCMP + H2O + H(+) = dUMP + NH4(+). Allosteric enzyme whose activity is greatly influenced by the end products of its metabolic pathway, dCTP and dTTP. Supplies the nucleotide substrate for thymidylate synthetase. This is Deoxycytidylate deaminase (CD) from Enterobacteria phage T2 (Bacteriophage T2).